The sequence spans 266 residues: uncharacterized protein (266 aa).

Transmembrane regions (helical) follow at residues 25-45, 64-84, 111-131, 158-178, 186-206, 209-229, and 230-250; these read LPSL…GYLL, IGAA…AELI, IVTI…GHLV, VLIS…LSFG, ILGI…HVVA, FVIP…IGNI, and IPAF…IYFI.

Belongs to the FNT transporter (TC 1.A.16) family.

Its subcellular location is the cell membrane. This is an uncharacterized protein from Bacillus subtilis (strain 168).